A 403-amino-acid polypeptide reads, in one-letter code: Tripartite motif-containing protein 59 (403 aa).

The segment at 10 to 60 (CPICYSIFEDPRVLPCSHTFCRNCLENVLQASGNFYIWRPLRIPLKCPNCR) adopts an RING-type zinc-finger fold. A B box-type zinc finger spans residues 92-134 (PDVVTCPEHYRQPLNVYCLLDKKLVCGHCLTIGQHHGHPIDDL). Residues cysteine 97, histidine 100, cysteine 120, and histidine 126 each coordinate Zn(2+). The stretch at 163-246 (LIEKLEEQKC…TITTSLQDES (84 aa)) forms a coiled coil. Residues 329 to 349 (ILNIAIVSLISVILMLILLFN) traverse the membrane as a helical segment.

It belongs to the TRIM/RBCC family. As to quaternary structure, interacts with ECSIT. In terms of tissue distribution, moderately expressed in the spleen, brain and heart and very highly expressed in the testis.

Its subcellular location is the endoplasmic reticulum membrane. The catalysed reaction is S-ubiquitinyl-[E2 ubiquitin-conjugating enzyme]-L-cysteine + [acceptor protein]-L-lysine = [E2 ubiquitin-conjugating enzyme]-L-cysteine + N(6)-ubiquitinyl-[acceptor protein]-L-lysine.. It participates in protein modification; protein ubiquitination. Its function is as follows. E3 ubiquitin ligase involved in different processes such as development and immune response. Serves as a negative regulator for innate immune signaling pathways by suppressing RLR-induced activation of IRF3/7 and NF-kappa-B via interaction with adapter ECSIT. Regulates autophagy through modulating both the transcription and the ubiquitination of BECN1. On the one hand, regulates the transcription of BECN1 through negatively modulating the NF-kappa-B pathway. On the other hand, regulates TRAF6-mediated 'Lys-63'-linked ubiquitination of BECN1, thus affecting the formation of the BECN1-PIK3C3 complex. In addition, mediates 'Lys-48'-linked ubiquitination of TRAF6 and thereby promotes TRAF6 proteasomal degradation. Also acts as a critical regulator for early embryo development from blastocyst stage to gastrula through modulating F-actin assembly and WASH1 'Lys-63'-linked ubiquitination. The polypeptide is Tripartite motif-containing protein 59 (Trim59) (Mus musculus (Mouse)).